A 224-amino-acid chain; its full sequence is Menaquinol:cytochrome c reductase cytochrome b subunit (224 aa).

A helical transmembrane segment spans residues 37–57 (FSAFVYCFGGLTFFVTVIQVL). Residue tyrosine 42 coordinates heme b. Cysteine 43 is a heme c binding site. Heme b-binding residues include arginine 91, histidine 94, histidine 108, and arginine 111. A run of 3 helical transmembrane segments spans residues 96 to 116 (WGAS…FFQG), 126 to 146 (WIVG…GYLL), and 195 to 215 (IHVF…FIMI). Residues histidine 196 and histidine 211 each contribute to the heme b site. Heme c-binding residues include arginine 216 and isoleucine 220. Serine 221 provides a ligand contact to heme b.

Belongs to the cytochrome b family. The main subunits of the menaquinol:cytochrome c complex are a Rieske-type iron-sulfur protein (QcrA), a cytochrome b (QcrB) and a cytochrome c (QcrC). Heme b is required as a cofactor. Requires heme c as cofactor.

It is found in the cell membrane. Its function is as follows. Component of the menaquinol:cytochrome c reductase complex. This is Menaquinol:cytochrome c reductase cytochrome b subunit from Bacillus subtilis (strain 168).